Consider the following 221-residue polypeptide: Uracil-DNA glycosylase (221 aa).

Asp-65 (proton acceptor) is an active-site residue.

This sequence belongs to the uracil-DNA glycosylase (UDG) superfamily. UNG family.

It localises to the cytoplasm. It catalyses the reaction Hydrolyzes single-stranded DNA or mismatched double-stranded DNA and polynucleotides, releasing free uracil.. In terms of biological role, excises uracil residues from the DNA which can arise as a result of misincorporation of dUMP residues by DNA polymerase or due to deamination of cytosine. In Christiangramia forsetii (strain DSM 17595 / CGMCC 1.15422 / KT0803) (Gramella forsetii), this protein is Uracil-DNA glycosylase.